Consider the following 386-residue polypeptide: N-acetylneuraminate epimerase (386 aa).

The first 29 residues, 1–29, serve as a signal peptide directing secretion; sequence MGMQMKNFKKMMTLMALCLSVAITTSGYA. 7 Kelch repeats span residues 51 to 95, 97 to 149, 151 to 186, 187 to 232, 235 to 284, 306 to 355, and 357 to 386; these read VIYV…VFLN, ELYV…VKLN, TMVL…KVIY, NYFN…VMEN, LMLI…LAGA, QNYT…SYGD, and VFLI…LLIK. Glutamate 241 functions as the Proton acceptor in the catalytic mechanism.

This sequence belongs to the NanM family. As to quaternary structure, homodimer.

Its subcellular location is the periplasm. It catalyses the reaction N-acetyl-alpha-neuraminate = N-acetyl-beta-neuraminate. Functionally, converts alpha-N-acetylneuranimic acid (Neu5Ac) to the beta-anomer, accelerating the equilibrium between the alpha- and beta-anomers. Probably facilitates sialidase-negative bacteria to compete successfully for limited amounts of extracellular Neu5Ac, which is likely taken up in the beta-anomer. In addition, the rapid removal of sialic acid from solution might be advantageous to the bacterium to damp down host responses. This Salmonella choleraesuis (strain SC-B67) protein is N-acetylneuraminate epimerase.